The sequence spans 351 residues: MEKQNFVVLKNICKRFGSNTVIGNLDLEIKKGSLVTLLGPSGCGKTTVLRLVAGLEKPTSGQIFIDGEDVTERSIQQRDICMVFQSYALFPHMSLYENVAYGLKMLKLPSEEVRQRVDEALKIVDLEGMGERYVDQISGGQQQRVALARALVLKPKVLLFDEPLSNLDANLRRSMRETIRELQQRFDITSLYVTHDQAEAFAVSDTVIVMKQGDIMQIGTPQELYKAPKSMFMANFMGEANMFQGHFDGQQIHINGYAIDADLEVTRDKPNGEYQIGVRPEAITLHTQGSESQACQILKSAYMGSMYEVTVKWHDQELLLQLNSAQFNHTLTQHAYVVFNPRGLFLLPYAE.

An ABC transporter domain is found at 7 to 237 (VVLKNICKRF…PKSMFMANFM (231 aa)). Residue 39–46 (GPSGCGKT) participates in ATP binding.

This sequence belongs to the ABC transporter superfamily. Fe(3+) ion importer (TC 3.A.1.10) family. As to quaternary structure, the complex is composed of two ATP-binding proteins (FbpC), two transmembrane proteins (FbpB) and a solute-binding protein (FbpA).

It is found in the cell inner membrane. It catalyses the reaction Fe(3+)(out) + ATP + H2O = Fe(3+)(in) + ADP + phosphate + H(+). Its function is as follows. Part of the ABC transporter complex FbpABC involved in Fe(3+) ions import. Responsible for energy coupling to the transport system. This Vibrio cholerae serotype O1 (strain ATCC 39315 / El Tor Inaba N16961) protein is Fe(3+) ions import ATP-binding protein FbpC.